Reading from the N-terminus, the 525-residue chain is Probable feruloyl esterase B-1 (525 aa).

The N-terminal stretch at 1–20 is a signal peptide; sequence MMRWFLLIGLASAAATDSSA. Cystine bridges form between cysteine 26–cysteine 75, cysteine 61–cysteine 114, cysteine 187–cysteine 442, cysteine 256–cysteine 273, cysteine 282–cysteine 292, and cysteine 502–cysteine 524. Residues asparagine 51, asparagine 80, and asparagine 98 are each glycosylated (N-linked (GlcNAc...) asparagine). The Acyl-ester intermediate role is filled by serine 188. Ca(2+) contacts are provided by aspartate 257, aspartate 260, alanine 262, and aspartate 264. Residues asparagine 283, asparagine 288, and asparagine 351 are each glycosylated (N-linked (GlcNAc...) asparagine). Active-site charge relay system residues include aspartate 401 and histidine 441.

The protein belongs to the tannase family.

It localises to the secreted. It carries out the reaction feruloyl-polysaccharide + H2O = ferulate + polysaccharide.. Involved in degradation of plant cell walls. Hydrolyzes the feruloyl-arabinose ester bond in arabinoxylans as well as the feruloyl-galactose and feruloyl-arabinose ester bonds in pectin. This is Probable feruloyl esterase B-1 (faeB-1) from Neosartorya fischeri (strain ATCC 1020 / DSM 3700 / CBS 544.65 / FGSC A1164 / JCM 1740 / NRRL 181 / WB 181) (Aspergillus fischerianus).